Consider the following 513-residue polypeptide: GMP synthase [glutamine-hydrolyzing] (513 aa).

The Glutamine amidotransferase type-1 domain maps to 3–200 (SVTVLDFGSQ…LIDIAGIKPD (198 aa)). Cys-80 (nucleophile) is an active-site residue. Catalysis depends on residues His-174 and Glu-176. The region spanning 201–388 (WSPKSFIGHQ…LGIAEDILMR (188 aa)) is the GMPS ATP-PPase domain. 228-234 (SGGVDST) lines the ATP pocket.

Homodimer.

The catalysed reaction is XMP + L-glutamine + ATP + H2O = GMP + L-glutamate + AMP + diphosphate + 2 H(+). The protein operates within purine metabolism; GMP biosynthesis; GMP from XMP (L-Gln route): step 1/1. Catalyzes the synthesis of GMP from XMP. This is GMP synthase [glutamine-hydrolyzing] from Chlorobium phaeobacteroides (strain DSM 266 / SMG 266 / 2430).